A 266-amino-acid chain; its full sequence is Expansin-A13 (266 aa).

A signal peptide spans 1–19; sequence MQRFLLPLLFLALSPPAIC. In terms of domain architecture, Expansin-like EG45 spans 58–171; sequence GGACGYGDLV…RRINCRKEGS (114 aa). The Expansin-like CBD domain maps to 181–260; the sequence is IFISVLITNV…NWNYGQTFEG (80 aa).

Belongs to the expansin family. Expansin A subfamily.

It is found in the secreted. The protein localises to the cell wall. The protein resides in the membrane. Its function is as follows. Causes loosening and extension of plant cell walls by disrupting non-covalent bonding between cellulose microfibrils and matrix glucans. No enzymatic activity has been found. This Arabidopsis thaliana (Mouse-ear cress) protein is Expansin-A13 (EXPA13).